Reading from the N-terminus, the 284-residue chain is D-tagatose-1,6-bisphosphate aldolase subunit GatY (284 aa).

Residue D82 is the Proton donor of the active site. H83 and H180 together coordinate Zn(2+). G181 contributes to the dihydroxyacetone phosphate binding site. Residue H208 participates in Zn(2+) binding. Dihydroxyacetone phosphate contacts are provided by residues G209–S211 and N230–T233.

Belongs to the class II fructose-bisphosphate aldolase family. TagBP aldolase GatY subfamily. In terms of assembly, forms a complex with GatZ. The cofactor is Zn(2+).

The enzyme catalyses D-tagatofuranose 1,6-bisphosphate = D-glyceraldehyde 3-phosphate + dihydroxyacetone phosphate. It functions in the pathway carbohydrate metabolism; D-tagatose 6-phosphate degradation; D-glyceraldehyde 3-phosphate and glycerone phosphate from D-tagatose 6-phosphate: step 2/2. Its function is as follows. Catalytic subunit of the tagatose-1,6-bisphosphate aldolase GatYZ, which catalyzes the reversible aldol condensation of dihydroxyacetone phosphate (DHAP or glycerone-phosphate) with glyceraldehyde 3-phosphate (G3P) to produce tagatose 1,6-bisphosphate (TBP). Requires GatZ subunit for full activity and stability. Is involved in the catabolism of galactitol. The protein is D-tagatose-1,6-bisphosphate aldolase subunit GatY of Escherichia coli O8 (strain IAI1).